The chain runs to 406 residues: Putative nickel insertion protein (406 aa).

It belongs to the LarC family.

In Methanosphaera stadtmanae (strain ATCC 43021 / DSM 3091 / JCM 11832 / MCB-3), this protein is Putative nickel insertion protein.